A 427-amino-acid chain; its full sequence is Glutamate-1-semialdehyde 2,1-aminomutase (427 aa).

Lys267 is modified (N6-(pyridoxal phosphate)lysine).

It belongs to the class-III pyridoxal-phosphate-dependent aminotransferase family. HemL subfamily. As to quaternary structure, homodimer. It depends on pyridoxal 5'-phosphate as a cofactor.

It is found in the cytoplasm. It catalyses the reaction (S)-4-amino-5-oxopentanoate = 5-aminolevulinate. Its pathway is porphyrin-containing compound metabolism; protoporphyrin-IX biosynthesis; 5-aminolevulinate from L-glutamyl-tRNA(Glu): step 2/2. The protein is Glutamate-1-semialdehyde 2,1-aminomutase of Geobacter metallireducens (strain ATCC 53774 / DSM 7210 / GS-15).